The primary structure comprises 234 residues: UstYa family oxidase phomYd' (234 aa).

The disordered stretch occupies residues 1 to 26 (MEKFFSPSRHNYADLSPTDVPASEES). The helical transmembrane segment at 47-69 (VLVNRLLAASTVALVMVSLWLGW) threads the bilayer. The HXXHC 1 motif lies at 151 to 155 (HWDHC). An N-linked (GlcNAc...) asparagine glycan is attached at Asn-208.

This sequence belongs to the ustYa family.

Its subcellular location is the membrane. It participates in mycotoxin biosynthesis. In terms of biological role, ustYa family oxidase; part of the gene cluster that mediates the biosynthesis of the phomopsins, a group of hexapeptide mycotoxins which infects lupins and causes lupinosis disease in livestock. Within the pathway, phomYd' catalyzes the desaturation of the Asp moiety into 2,3-dehydroaspartic acid (dAsp). The pathway starts with the processing of the precursor phomA' by several endopeptidases including kexin proteases as well as the cluster-specific S41 family peptidase phomP1 and the oligopeptidase phomG' to produce 10 identical copies of the hexapeptide Tyr-Val-Ile-Pro-Ile-Asp. After being excised from the precursor peptide, the core peptides are cyclized and modified post-translationally by enzymes encoded within the gene cluster. The timing and order of proteolysis of the phomA' precursor and PTMs are still unknown. Two tyrosinase-like enzymes, phomQ1' and phomQ2, catalyze the chlorination and hydroxylation of Tyr, respectively. PhomYb, is proposed to be involved in the construction of the macrocyclic structure. The other 4 ustYa family proteins may be involved in PTMs that generate the unique structure of phomopsin A. PhomYa' is required for the hydroxylation of C-beta of Tyr. PhomYc', phomYd', and phomYe are responsible for the biosynthesis of 2,3-dehydroisoleucine (dIle), 2,3-dehydroaspartic acid (dAsp), and 3,4-dehydroproline (dPro), respectively. While dIle formation by phomYc' is indispensable for the installation of dAsp by phomYd', the order of the other PTMs have not been elucidated yet. Most of the biosynthetic enzymes likely have broad substrate specificity, and thus, there might be a metabolic grid from a precursor to phomopsin A. The enzyme(s) responsible for the biosynthesis of 3,4-dehydrovaline (dVal) have also not been identified yet. Finally, phomM' acts as an S-adenosylmethionine-dependent alpha-N-methyltransferase that catalyzes two successive N-methylation reactions, converting N-desmethyl-phomopsin A to phomopsin A and phomopsin A further to an N,N-dimethylated congener called phomopsin E. The sequence is that of UstYa family oxidase phomYd' from Diaporthe leptostromiformis (Lupinosis disease fungus).